Consider the following 233-residue polypeptide: MQEFDLTRRCVAEALGTGLLVAAVVGSGIMADALTADDALALVANTIATGAILVVLVTILGPLSGAHFNPAVSLVFALSGRLTRRDCAAYVIAQVAGAIAGTALAHLMFDLPPLDMSMKVRTGPAQWLSEGVAAFGLVATILAGIRFHREAVPWLVGLYITAAYWFTASTSFANPAVALARSFTNTFSGIRPGDLPGFVIAELLGAVCALALMRWLLQPARPIIRQTSPETAP.

2 helical membrane-spanning segments follow: residues 11–31 and 40–60; these read VAEA…GIMA and LALV…VTIL. The NPA 1 motif lies at 69–71; sequence NPA. The next 3 membrane-spanning stretches (helical) occupy residues 89–109, 125–145, and 152–172; these read AYVI…HLMF, AQWL…LAGI, and VPWL…STSF. An NPA 2 motif is present at residues 174 to 176; it reads NPA. Residues 193 to 213 form a helical membrane-spanning segment; it reads GDLPGFVIAELLGAVCALALM.

Belongs to the MIP/aquaporin (TC 1.A.8) family. NIP (TC 1.A.8.12) subfamily.

It is found in the cell inner membrane. Its function is as follows. Involved in resistance to arsenic. Facilitates efflux of arsenite [As(III)]. Arsenate [As(V)] enters the cell through phosphate transport systems and is reduced to arsenite by the arsenate reductase ArsC. Internally generated arsenite flows out of the cell by downhill movement through AqpS. Can also transport the highly toxic methylarsenite [MAs(III)] and the relatively non-toxic methylarsenate [MAs(V)]. May be a component of an methylarsenite resistance pathway in which methylarsenite enters cells via AqpS, is oxidized by ArsH to methylarsenate, which exits the cells via AqpS. This pathway may confer a selective advantage for R.melliloti to grow in the presence of environmental methylarsenicals. The chain is Aquaglyceroporin AqpS from Rhizobium meliloti (strain 1021) (Ensifer meliloti).